A 384-amino-acid polypeptide reads, in one-letter code: Inactive lipoate--protein ligase 2 (384 aa).

A BPL/LPL catalytic domain is found at 79-303 (NESKGNECIF…HIKHIINYKN (225 aa)).

The protein resides in the mitochondrion. Its subcellular location is the plastid. It is found in the apicoplast. In terms of biological role, in the mitochondrion and together with LipL1, involved in the lipoylation of the E2 component of the branched chain alpha-ketoacid dehydrogenase complex BCKDH-E2/BCDH and the E2 component of the alpha -ketoglutarate dehydrogenase complex KDH. LipL1 is responsible for catalysing the activation of lipoate, forming lipoyl-AMP while LipL2 is required but is not capable of catalyzing this reaction. Although its role is unclear, it may catalyze the transfer of lipoyl groups from lipoyl-AMP to BCDH and KDH or act as an effector protein. This Plasmodium falciparum (isolate 3D7) protein is Inactive lipoate--protein ligase 2.